Reading from the N-terminus, the 230-residue chain is Cytidylate kinase (230 aa).

Gly11 to Thr19 serves as a coordination point for ATP.

This sequence belongs to the cytidylate kinase family. Type 1 subfamily.

Its subcellular location is the cytoplasm. The catalysed reaction is CMP + ATP = CDP + ADP. It catalyses the reaction dCMP + ATP = dCDP + ADP. The sequence is that of Cytidylate kinase from Chloroflexus aggregans (strain MD-66 / DSM 9485).